Consider the following 94-residue polypeptide: Small ribosomal subunit protein uS17 (94 aa).

Belongs to the universal ribosomal protein uS17 family. As to quaternary structure, part of the 30S ribosomal subunit.

One of the primary rRNA binding proteins, it binds specifically to the 5'-end of 16S ribosomal RNA. This chain is Small ribosomal subunit protein uS17, found in Symbiobacterium thermophilum (strain DSM 24528 / JCM 14929 / IAM 14863 / T).